The chain runs to 361 residues: 3-dehydroquinate synthase (361 aa).

NAD(+) is bound by residues 72 to 77 (SGEKEK), 130 to 131 (TT), lysine 142, and lysine 151. The Zn(2+) site is built by glutamate 184, histidine 247, and histidine 264.

The protein belongs to the sugar phosphate cyclases superfamily. Dehydroquinate synthase family. Co(2+) serves as cofactor. It depends on Zn(2+) as a cofactor. The cofactor is NAD(+).

The protein resides in the cytoplasm. It catalyses the reaction 7-phospho-2-dehydro-3-deoxy-D-arabino-heptonate = 3-dehydroquinate + phosphate. The protein operates within metabolic intermediate biosynthesis; chorismate biosynthesis; chorismate from D-erythrose 4-phosphate and phosphoenolpyruvate: step 2/7. In terms of biological role, catalyzes the conversion of 3-deoxy-D-arabino-heptulosonate 7-phosphate (DAHP) to dehydroquinate (DHQ). This chain is 3-dehydroquinate synthase, found in Bacillus cereus (strain AH820).